Reading from the N-terminus, the 666-residue chain is Secreted protein ARB_01864 (666 aa).

Positions 1–18 (MRFSTLVSLAAWAAAALA) are cleaved as a signal peptide. N-linked (GlcNAc...) asparagine glycans are attached at residues asparagine 160, asparagine 216, asparagine 342, asparagine 405, asparagine 594, asparagine 600, and asparagine 662. The interval 323-353 (RGSMKPRGVPNPTRRAIKGNATTSTQPYQHP) is disordered.

Its subcellular location is the secreted. In Arthroderma benhamiae (strain ATCC MYA-4681 / CBS 112371) (Trichophyton mentagrophytes), this protein is Secreted protein ARB_01864.